The primary structure comprises 108 residues: Putative disulfide oxidoreductase YuzD (108 aa).

A disulfide bridge connects residues cysteine 16 and cysteine 19.

This chain is Putative disulfide oxidoreductase YuzD (yuzD), found in Bacillus subtilis (strain 168).